We begin with the raw amino-acid sequence, 225 residues long: Membrane protein (225 aa).

Over 1–20 (MDNTTNCTLGTEQAVQLFKE) the chain is Virion surface. A helical membrane pass occupies residues 21-41 (YNLFVTAFLLFLTILLQYGYA). The Intravirion segment spans residues 42 to 51 (TRNKVIYILK). Residues 52–72 (MIVLWCFWPLNIAVGAISCIY) traverse the membrane as a helical segment. The Virion surface portion of the chain corresponds to 73 to 77 (PPNTG). A helical transmembrane segment spans residues 78–98 (GLVAAIILTVFACLSFIGYWI). Residues 99-225 (QSFRLFKRCR…VATGGSSLYT (127 aa)) are Intravirion-facing.

It belongs to the gammacoronaviruses M protein family. In terms of assembly, homomultimer. Interacts with envelope E protein in the budding compartment of the host cell, which is located between endoplasmic reticulum and the Golgi complex. Forms a complex with HE and S proteins. Interacts with nucleocapsid N protein. This interaction probably participates in RNA packaging into the virus.

The protein localises to the virion membrane. The protein resides in the host Golgi apparatus membrane. Its function is as follows. Component of the viral envelope that plays a central role in virus morphogenesis and assembly via its interactions with other viral proteins. This is Membrane protein from Avian infectious bronchitis virus (strain 6/82) (IBV).